The following is a 638-amino-acid chain: Gamma-aminobutyric acid receptor subunit theta (638 aa).

Residues 1-21 (MGIRGMLRAAALLLLIRTWLA) form the signal peptide. At 22 to 267 (ESNGPSPTPK…FQVQREVRSY (246 aa)) the chain is on the extracellular side. N-linked (GlcNAc...) asparagine glycosylation occurs at Asn127. Cys183 and Cys197 are joined by a disulfide. Residues 268–288 (LVQVYWPTVLTTILSWISFWM) form a helical membrane-spanning segment. The Cytoplasmic segment spans residues 289–296 (NYDSSAAR). Residues 297–314 (VTIGLTSILVLTTIDSHM) form a helical membrane-spanning segment. Residues 315–325 (RDKLPHISCIK) are Extracellular-facing. The chain crosses the membrane as a helical span at residues 326–346 (AIDIYILVCLFFVFLSLLEYV). Topologically, residues 347 to 617 (YINYLFFSQV…NRVPKVDRWS (271 aa)) are cytoplasmic. The segment at 491 to 515 (ACDDEDSEESLSSEESHGHGSSHTG) is disordered. The span at 492–502 (CDDEDSEESLS) shows a compositional bias: acidic residues. Residues 618–638 (RFLFPLSFGLFNVVYWLYHVY) traverse the membrane as a helical segment.

It belongs to the ligand-gated ion channel (TC 1.A.9) family. Gamma-aminobutyric acid receptor (TC 1.A.9.5) subfamily. GABRQ sub-subfamily. As to quaternary structure, heteropentamer, formed by a combination of alpha (GABRA1-6), beta (GABRB1-3), gamma (GABRG1-3), delta (GABRD), epsilon (GABRE), rho (GABRR1-3), pi (GABRP) and theta (GABRQ) chains, each subunit exhibiting distinct physiological and pharmacological properties. Expressed in brain, lung, and spleen.

It is found in the postsynaptic cell membrane. The protein localises to the cell membrane. It catalyses the reaction chloride(in) = chloride(out). With respect to regulation, potentiated by etomidate, propofol, pregnanolone and pentobarbital. Functionally, theta subunit of the heteropentameric ligand-gated chloride channel gated by gamma-aminobutyric acid (GABA), a major inhibitory neurotransmitter in the brain. GABA-gated chloride channels, also named GABA(A) receptors (GABAAR), consist of five subunits arranged around a central pore and contain GABA active binding site(s) located at the alpha and beta subunit interfaces. When activated by GABA, GABAARs selectively allow the flow of chloride anions across the cell membrane down their electrochemical gradient. This is Gamma-aminobutyric acid receptor subunit theta from Mus musculus (Mouse).